The chain runs to 213 residues: NADH-quinone oxidoreductase subunit I (213 aa).

4Fe-4S ferredoxin-type domains lie at 74 to 103 and 113 to 142; these read RFIE…METS and ENYS…HGTE. Positions 83, 86, 89, 93, 122, 125, 128, and 132 each coordinate [4Fe-4S] cluster.

It belongs to the complex I 23 kDa subunit family. In terms of assembly, NDH-1 is composed of 14 different subunits. Subunits NuoA, H, J, K, L, M, N constitute the membrane sector of the complex. Requires [4Fe-4S] cluster as cofactor.

Its subcellular location is the cell inner membrane. The catalysed reaction is a quinone + NADH + 5 H(+)(in) = a quinol + NAD(+) + 4 H(+)(out). In terms of biological role, NDH-1 shuttles electrons from NADH, via FMN and iron-sulfur (Fe-S) centers, to quinones in the respiratory chain. The immediate electron acceptor for the enzyme in this species is believed to be ubiquinone. Couples the redox reaction to proton translocation (for every two electrons transferred, four hydrogen ions are translocated across the cytoplasmic membrane), and thus conserves the redox energy in a proton gradient. In Campylobacter jejuni subsp. jejuni serotype O:23/36 (strain 81-176), this protein is NADH-quinone oxidoreductase subunit I.